We begin with the raw amino-acid sequence, 97 residues long: Aspartyl/glutamyl-tRNA(Asn/Gln) amidotransferase subunit C (97 aa).

It belongs to the GatC family. In terms of assembly, heterotrimer of A, B and C subunits.

The catalysed reaction is L-glutamyl-tRNA(Gln) + L-glutamine + ATP + H2O = L-glutaminyl-tRNA(Gln) + L-glutamate + ADP + phosphate + H(+). The enzyme catalyses L-aspartyl-tRNA(Asn) + L-glutamine + ATP + H2O = L-asparaginyl-tRNA(Asn) + L-glutamate + ADP + phosphate + 2 H(+). Its function is as follows. Allows the formation of correctly charged Asn-tRNA(Asn) or Gln-tRNA(Gln) through the transamidation of misacylated Asp-tRNA(Asn) or Glu-tRNA(Gln) in organisms which lack either or both of asparaginyl-tRNA or glutaminyl-tRNA synthetases. The reaction takes place in the presence of glutamine and ATP through an activated phospho-Asp-tRNA(Asn) or phospho-Glu-tRNA(Gln). This chain is Aspartyl/glutamyl-tRNA(Asn/Gln) amidotransferase subunit C, found in Nostoc punctiforme (strain ATCC 29133 / PCC 73102).